A 393-amino-acid polypeptide reads, in one-letter code: Elongation factor Tu (393 aa).

The tr-type G domain occupies 10–203 (KPHVNIGTIG…AVDSYIPQPV (194 aa)). The G1 stretch occupies residues 19 to 26 (GHVDHGKT). GTP is bound at residue 19–26 (GHVDHGKT). Thr26 lines the Mg(2+) pocket. A G2 region spans residues 60–64 (GITIS). The segment at 81 to 84 (DCPG) is G3. GTP contacts are provided by residues 81–85 (DCPGH) and 136–139 (NKVD). A G4 region spans residues 136–139 (NKVD). The G5 stretch occupies residues 173–175 (SAL).

It belongs to the TRAFAC class translation factor GTPase superfamily. Classic translation factor GTPase family. EF-Tu/EF-1A subfamily. Monomer.

It localises to the cytoplasm. The catalysed reaction is GTP + H2O = GDP + phosphate + H(+). GTP hydrolase that promotes the GTP-dependent binding of aminoacyl-tRNA to the A-site of ribosomes during protein biosynthesis. The protein is Elongation factor Tu of Chlorobaculum tepidum (strain ATCC 49652 / DSM 12025 / NBRC 103806 / TLS) (Chlorobium tepidum).